The following is a 663-amino-acid chain: DNA ligase (663 aa).

NAD(+) is bound by residues 31–35 (DFEYD), 80–81 (SL), and Glu-110. Lys-112 (N6-AMP-lysine intermediate) is an active-site residue. Residues Arg-133, Glu-168, Lys-284, and Lys-308 each contribute to the NAD(+) site. Residues Cys-402, Cys-405, Cys-420, and Cys-425 each contribute to the Zn(2+) site. A BRCT domain is found at 586-663 (IKDNRFEGKT…DEDKFRKMIE (78 aa)).

This sequence belongs to the NAD-dependent DNA ligase family. LigA subfamily. Mg(2+) is required as a cofactor. Mn(2+) serves as cofactor.

It carries out the reaction NAD(+) + (deoxyribonucleotide)n-3'-hydroxyl + 5'-phospho-(deoxyribonucleotide)m = (deoxyribonucleotide)n+m + AMP + beta-nicotinamide D-nucleotide.. Its function is as follows. DNA ligase that catalyzes the formation of phosphodiester linkages between 5'-phosphoryl and 3'-hydroxyl groups in double-stranded DNA using NAD as a coenzyme and as the energy source for the reaction. It is essential for DNA replication and repair of damaged DNA. This chain is DNA ligase, found in Acetivibrio thermocellus (strain ATCC 27405 / DSM 1237 / JCM 9322 / NBRC 103400 / NCIMB 10682 / NRRL B-4536 / VPI 7372) (Clostridium thermocellum).